Consider the following 127-residue polypeptide: MSNRKPYVREVKRTWWKNHPFYRFYMLREATVLPLILFTIFLTFGLGSLVKGPEAWQGWLEFMANPIVVAINIVALLGSLFHAQTFFSMMPQVMPIRLKGKPVDKKIIVLTQWAAVAFISLIVLIVM.

Helical transmembrane passes span 30–50 (ATVL…GSLV), 67–87 (IVVA…QTFF), and 107–127 (IIVL…LIVM).

This sequence belongs to the FrdC family. In terms of assembly, part of an enzyme complex containing four subunits: a flavoprotein (FrdA), an iron-sulfur protein (FrdB), and two hydrophobic anchor proteins (FrdC and FrdD).

Its subcellular location is the cell inner membrane. Anchors the catalytic components of the fumarate reductase complex to the cell membrane, binds quinones. The chain is Fumarate reductase subunit C from Vibrio campbellii (strain ATCC BAA-1116).